We begin with the raw amino-acid sequence, 178 residues long: Ribosomal RNA small subunit methyltransferase G (178 aa).

Residues G54, L59, 105–106 (LE), and R120 contribute to the S-adenosyl-L-methionine site.

It belongs to the methyltransferase superfamily. RNA methyltransferase RsmG family.

The protein localises to the cytoplasm. The enzyme catalyses guanosine(527) in 16S rRNA + S-adenosyl-L-methionine = N(7)-methylguanosine(527) in 16S rRNA + S-adenosyl-L-homocysteine. In terms of biological role, specifically methylates the N7 position of guanine in position 527 of 16S rRNA. This Helicobacter pylori (strain HPAG1) protein is Ribosomal RNA small subunit methyltransferase G.